The chain runs to 614 residues: Fructokinase-like 2, chloroplastic (614 aa).

Residues 1-44 constitute a chloroplast transit peptide; that stretch reads MASLSFTQFLSFPRCNADVPCLLQSHGFVKFRGERWNGKQSFSM. 2 disordered regions span residues 47-75 and 542-592; these read GRRK…KPSK and GYPP…YVMK. Residues 548–563 show a composition bias toward acidic residues; sequence DMEEEEDDEEEDEVES. The segment covering 571–583 has biased composition (basic and acidic residues); the sequence is ITEKEYRTSKPYD.

This sequence belongs to the carbohydrate kinase PfkB family. As to quaternary structure, interacts with CITRX/TRXz. Binds to FLN1 and PTAC5. Associates with the plastid-encoded RNA polymerase (PEP) complex.

It localises to the plastid. It is found in the chloroplast. Functionally, required for proper chloroplast development, most likely through regulating plastid-encoded polymerase (PEP) dependent chloroplast transcription. Acts as a component of the transcriptionally active plastid chromosome that is required for plastid gene expression. This is Fructokinase-like 2, chloroplastic from Arabidopsis thaliana (Mouse-ear cress).